The following is a 582-amino-acid chain: Aspartate--tRNA ligase (582 aa).

Residue E174 participates in L-aspartate binding. An aspartate region spans residues 198 to 201 (QITK). R220 is an L-aspartate binding site. Residues 220–222 (RDE) and Q229 contribute to the ATP site. H443 contacts L-aspartate. E477 provides a ligand contact to ATP. R484 serves as a coordination point for L-aspartate. 529 to 532 (GLDR) contributes to the ATP binding site.

Belongs to the class-II aminoacyl-tRNA synthetase family. Type 1 subfamily. As to quaternary structure, homodimer.

It is found in the cytoplasm. The catalysed reaction is tRNA(Asp) + L-aspartate + ATP = L-aspartyl-tRNA(Asp) + AMP + diphosphate. In terms of biological role, catalyzes the attachment of L-aspartate to tRNA(Asp) in a two-step reaction: L-aspartate is first activated by ATP to form Asp-AMP and then transferred to the acceptor end of tRNA(Asp). This chain is Aspartate--tRNA ligase, found in Streptococcus pyogenes serotype M18 (strain MGAS8232).